We begin with the raw amino-acid sequence, 296 residues long: UDP-N-acetylglucosamine transporter TMEM241 (296 aa).

A run of 10 helical transmembrane segments spans residues 7 to 29, 32 to 52, 67 to 87, 93 to 113, 121 to 141, 146 to 166, 187 to 207, 211 to 231, 250 to 270, and 271 to 291; these read LVGL…VLSV, FTYP…LLHV, SHVL…YAGS, LAIP…CGYQ, TSPA…CLPF, FNPD…AYKI, IFSV…FSVL, FLYF…GFFL, WIFF…DAIL, and TSAT…LVFS.

This sequence belongs to the nucleotide-sugar transporter family. SLC35A subfamily.

It is found in the golgi apparatus. The protein localises to the cis-Golgi network membrane. Golgi-localized UDP-N-acetylglucosamine (UDP-GlcNAc) transporter that transports UDP-N-acetylglucosamine into Golgi lumen. Contributes to lysosomal targeting of NPC2, a key protein required for lysosomal cholesterol exiting, and that utilizes the mannose-6-phosphate (M6P) modification pathway for its lysosomal targeting. The sequence is that of UDP-N-acetylglucosamine transporter TMEM241 from Homo sapiens (Human).